Consider the following 211-residue polypeptide: Dual specificity protein phosphatase 26 (211 aa).

A Tyrosine-protein phosphatase domain is found at 60 to 207 (NHADEVWPGL…LLALDRRLRQ (148 aa)). Residue C152 is the Phosphocysteine intermediate of the active site.

Belongs to the protein-tyrosine phosphatase family. Non-receptor class dual specificity subfamily. As to quaternary structure, interacts with HSF4.

The protein resides in the cytoplasm. The protein localises to the nucleus. It is found in the golgi apparatus. The enzyme catalyses O-phospho-L-tyrosyl-[protein] + H2O = L-tyrosyl-[protein] + phosphate. It carries out the reaction O-phospho-L-seryl-[protein] + H2O = L-seryl-[protein] + phosphate. It catalyses the reaction O-phospho-L-threonyl-[protein] + H2O = L-threonyl-[protein] + phosphate. In terms of biological role, inactivates MAPK1 and MAPK3 which leads to dephosphorylation of heat shock factor protein 4 and a reduction in its DNA-binding activity. The chain is Dual specificity protein phosphatase 26 (Dusp26) from Rattus norvegicus (Rat).